A 206-amino-acid chain; its full sequence is MEEEFLDIFDEEERLIGRKSRKEVHEKGYWHSTFHCWVVKREGKKTFLIFQKRHPLKDTAPNMFDVSSAGHIKSGESIEDGVRELKEELGIDAKPNELINIGIIKEEFHIGKNIDREFCHIYIYSNKAEIESYTLQRDEVVGLVKIEIDELARFLDNKIDGVFAEGFIVNQEGRRYKLSKILNKDDFVPHKYGYYKIVLRALMDDY.

Residues 29–169 (YWHSTFHCWV…DGVFAEGFIV (141 aa)) form the Nudix hydrolase domain. The Nudix box signature appears at 69-90 (AGHIKSGESIEDGVRELKEELG). Mg(2+) contacts are provided by Glu84 and Glu88.

It belongs to the Nudix hydrolase family. Mg(2+) is required as a cofactor.

This is an uncharacterized protein from Clostridium acetobutylicum (strain ATCC 824 / DSM 792 / JCM 1419 / IAM 19013 / LMG 5710 / NBRC 13948 / NRRL B-527 / VKM B-1787 / 2291 / W).